We begin with the raw amino-acid sequence, 373 residues long: Dual-specificity RNA methyltransferase RlmN (373 aa).

Catalysis depends on glutamate 94, which acts as the Proton acceptor. Residues 100 to 339 (EDDRATLCVS…VIVRKTRGDD (240 aa)) enclose the Radical SAM core domain. A disulfide bridge links cysteine 107 with cysteine 344. Cysteine 114, cysteine 118, and cysteine 121 together coordinate [4Fe-4S] cluster. S-adenosyl-L-methionine-binding positions include 168–169 (GE), serine 200, 222–224 (SIH), and asparagine 301. The S-methylcysteine intermediate role is filled by cysteine 344.

It belongs to the radical SAM superfamily. RlmN family. It depends on [4Fe-4S] cluster as a cofactor.

Its subcellular location is the cytoplasm. The catalysed reaction is adenosine(2503) in 23S rRNA + 2 reduced [2Fe-2S]-[ferredoxin] + 2 S-adenosyl-L-methionine = 2-methyladenosine(2503) in 23S rRNA + 5'-deoxyadenosine + L-methionine + 2 oxidized [2Fe-2S]-[ferredoxin] + S-adenosyl-L-homocysteine. It catalyses the reaction adenosine(37) in tRNA + 2 reduced [2Fe-2S]-[ferredoxin] + 2 S-adenosyl-L-methionine = 2-methyladenosine(37) in tRNA + 5'-deoxyadenosine + L-methionine + 2 oxidized [2Fe-2S]-[ferredoxin] + S-adenosyl-L-homocysteine. Functionally, specifically methylates position 2 of adenine 2503 in 23S rRNA and position 2 of adenine 37 in tRNAs. m2A2503 modification seems to play a crucial role in the proofreading step occurring at the peptidyl transferase center and thus would serve to optimize ribosomal fidelity. The polypeptide is Dual-specificity RNA methyltransferase RlmN (Shewanella sp. (strain MR-7)).